The primary structure comprises 428 residues: GTPase Obg (428 aa).

The region spanning 1-158 (MFVDQVKIYV…RDVILELKVL (158 aa)) is the Obg domain. The OBG-type G domain occupies 159 to 329 (ADVGLVGFPS…LLFEVANLIE (171 aa)). GTP-binding positions include 165–172 (GFPSVGKS), 190–194 (FTTIV), 212–215 (DLPG), 282–285 (NKMD), and 310–312 (SAV). Mg(2+)-binding residues include Ser-172 and Thr-192. The region spanning 350 to 428 (KFDTEGVKFE…ILEYEFEFID (79 aa)) is the OCT domain.

Belongs to the TRAFAC class OBG-HflX-like GTPase superfamily. OBG GTPase family. In terms of assembly, monomer. Mg(2+) is required as a cofactor.

The protein localises to the cytoplasm. Functionally, an essential GTPase which binds GTP, GDP and possibly (p)ppGpp with moderate affinity, with high nucleotide exchange rates and a fairly low GTP hydrolysis rate. Plays a role in control of the cell cycle, stress response, ribosome biogenesis and in those bacteria that undergo differentiation, in morphogenesis control. In Bacillus cereus (strain B4264), this protein is GTPase Obg.